A 451-amino-acid polypeptide reads, in one-letter code: Probable asparagine--tRNA ligase, cytoplasmic (451 aa).

It belongs to the class-II aminoacyl-tRNA synthetase family.

Its subcellular location is the cytoplasm. It catalyses the reaction tRNA(Asn) + L-asparagine + ATP = L-asparaginyl-tRNA(Asn) + AMP + diphosphate + H(+). The protein is Probable asparagine--tRNA ligase, cytoplasmic of Encephalitozoon cuniculi (strain GB-M1) (Microsporidian parasite).